The sequence spans 1767 residues: Trans-Golgi network-localized SYP41-interacting protein 1 (1767 aa).

Residues 1–72 form a disordered region; it reads MHEKDDLPQD…LTTDDDDNDD (72 aa). Residues 1 to 1748 are Cytoplasmic-facing; the sequence is MHEKDDLPQD…RVLMSRPQAR (1748 aa). A compositionally biased stretch (acidic residues) spans 16–32; that stretch reads IENDDESNGQEEEELDP. Coiled coils occupy residues 276-436, 493-516, 570-590, 684-805, and 845-1082; these read LSHL…MSTA, VRSL…LKDL, KSNI…MEET, VSNL…LQQS, and IQEV…LSSK. Residues 1177–1190 are compositionally biased toward polar residues; the sequence is DNSVNTEPENSQGS. The disordered stretch occupies residues 1177 to 1198; the sequence is DNSVNTEPENSQGSAADEDEIS. Coiled coils occupy residues 1251–1310, 1362–1424, 1522–1542, and 1603–1630; these read NSSL…FQEN, IRDM…WHEK, LKKA…AKNE, and LAGS…KAIQ. Residues 1749 to 1766 form a helical; Anchor for type IV membrane protein membrane-spanning segment; that stretch reads LGVMVYSLLLHLWLLASI. Leucine 1767 is a topological domain (vesicular).

In terms of assembly, interacts with SYP41. In terms of tissue distribution, expressed ubiquitously in roots, leaves and flowers, and, to a lower extent, in stems.

The protein localises to the golgi apparatus. It is found in the trans-Golgi network membrane. Its function is as follows. Tethering factor involved in vesicle fusion at the trans-Golgi network (TGN) thus being required for efficient protein trafficking to the vacuole. Implicated in resistance to salt and osmotic stresses. Modulates the cell morphology (e.g. epidermal cell file rotation (CFR) and cell expansion) in mature regions of roots and the base of hypocotyls as well as root skewing, a process leading to root movement within the soil in order to maximize anchorage and nutrient acquisition, probably by regulating microtubule stabilization independently of their orientation. In Arabidopsis thaliana (Mouse-ear cress), this protein is Trans-Golgi network-localized SYP41-interacting protein 1.